The chain runs to 316 residues: Methionyl-tRNA formyltransferase (316 aa).

112–115 contacts (6S)-5,6,7,8-tetrahydrofolate; the sequence is SLLP.

It belongs to the Fmt family.

It carries out the reaction L-methionyl-tRNA(fMet) + (6R)-10-formyltetrahydrofolate = N-formyl-L-methionyl-tRNA(fMet) + (6S)-5,6,7,8-tetrahydrofolate + H(+). In terms of biological role, attaches a formyl group to the free amino group of methionyl-tRNA(fMet). The formyl group appears to play a dual role in the initiator identity of N-formylmethionyl-tRNA by promoting its recognition by IF2 and preventing the misappropriation of this tRNA by the elongation apparatus. The protein is Methionyl-tRNA formyltransferase of Flavobacterium psychrophilum (strain ATCC 49511 / DSM 21280 / CIP 103535 / JIP02/86).